A 681-amino-acid chain; its full sequence is U3 small nucleolar ribonucleoprotein protein MPP10 (681 aa).

Phosphoserine occurs at positions 61, 120, and 140. A coiled-coil region spans residues glutamate 109–leucine 139. A compositionally biased stretch (acidic residues) spans glutamate 111–glycine 144. Disordered regions lie at residues glutamate 111–aspartate 202, leucine 215–lysine 256, and tyrosine 268–glutamine 365. The span at aspartate 145 to lysine 163 shows a compositional bias: basic and acidic residues. Serine 164, serine 168, and serine 172 each carry phosphoserine. The segment covering leucine 215 to aspartate 227 has biased composition (basic and acidic residues). Acidic residues-rich tracts occupy residues glycine 228–glutamate 248 and aspartate 273–asparagine 322. Phosphoserine occurs at positions 244, 247, 277, and 346. Positions alanine 349–lysine 383 form a coiled coil. Lysine 351 is covalently cross-linked (Glycyl lysine isopeptide (Lys-Gly) (interchain with G-Cter in SUMO2)). The segment covering glutamine 352 to glutamine 365 has biased composition (basic and acidic residues). Residues lysine 383 and lysine 395 each participate in a glycyl lysine isopeptide (Lys-Gly) (interchain with G-Cter in SUMO2) cross-link. Positions alanine 471 to asparagine 491 form a coiled coil. Residue lysine 556 forms a Glycyl lysine isopeptide (Lys-Gly) (interchain with G-Cter in SUMO2) linkage. Over residues lysine 560–lysine 576 the composition is skewed to basic and acidic residues. Residues lysine 560–glutamine 644 are disordered. Residues lysine 575–asparagine 604 are a coiled coil. Over residues arginine 577–leucine 599 the composition is skewed to basic residues. Position 609 is an N6-acetyllysine (lysine 609). The span at leucine 630 to leucine 640 shows a compositional bias: basic and acidic residues. Glycyl lysine isopeptide (Lys-Gly) (interchain with G-Cter in SUMO2) cross-links involve residues lysine 632 and lysine 649. The tract at residues glutamine 657–leucine 681 is disordered. The segment covering lysine 662–leucine 681 has biased composition (basic and acidic residues).

It belongs to the MPP10 family. In terms of assembly, part of the small subunit (SSU) processome, composed of more than 70 proteins and the RNA chaperone small nucleolar RNA (snoRNA) U3. Component of a heterotrimeric complex containing IMP3, IMP4 and MPHOSPH10. Interacts with IMP3 and IMP4. Phosphorylated in M (mitotic) phase.

It localises to the nucleus. Its subcellular location is the nucleolus. It is found in the chromosome. Component of the 60-80S U3 small nucleolar ribonucleoprotein (U3 snoRNP). Required for the early cleavages during pre-18S ribosomal RNA processing. Part of the small subunit (SSU) processome, first precursor of the small eukaryotic ribosomal subunit. During the assembly of the SSU processome in the nucleolus, many ribosome biogenesis factors, an RNA chaperone and ribosomal proteins associate with the nascent pre-rRNA and work in concert to generate RNA folding, modifications, rearrangements and cleavage as well as targeted degradation of pre-ribosomal RNA by the RNA exosome. This Mus musculus (Mouse) protein is U3 small nucleolar ribonucleoprotein protein MPP10 (Mphosph10).